We begin with the raw amino-acid sequence, 183 residues long: 2-C-methyl-D-erythritol 2,4-cyclodiphosphate synthase (183 aa).

Residues Asp10 and His12 each contribute to the a divalent metal cation site. 4-CDP-2-C-methyl-D-erythritol 2-phosphate is bound by residues 10–12 (DVH) and 38–39 (HS). His46 is an a divalent metal cation binding site. 4-CDP-2-C-methyl-D-erythritol 2-phosphate-binding positions include 60 to 62 (DIG) and 65 to 69 (FPDTD).

It belongs to the IspF family. As to quaternary structure, homotrimer. It depends on a divalent metal cation as a cofactor.

The enzyme catalyses 4-CDP-2-C-methyl-D-erythritol 2-phosphate = 2-C-methyl-D-erythritol 2,4-cyclic diphosphate + CMP. It participates in isoprenoid biosynthesis; isopentenyl diphosphate biosynthesis via DXP pathway; isopentenyl diphosphate from 1-deoxy-D-xylulose 5-phosphate: step 4/6. Functionally, involved in the biosynthesis of isopentenyl diphosphate (IPP) and dimethylallyl diphosphate (DMAPP), two major building blocks of isoprenoid compounds. Catalyzes the conversion of 4-diphosphocytidyl-2-C-methyl-D-erythritol 2-phosphate (CDP-ME2P) to 2-C-methyl-D-erythritol 2,4-cyclodiphosphate (ME-CPP) with a corresponding release of cytidine 5-monophosphate (CMP). This chain is 2-C-methyl-D-erythritol 2,4-cyclodiphosphate synthase, found in Verminephrobacter eiseniae (strain EF01-2).